A 452-amino-acid chain; its full sequence is UPF0210 protein Csac_1314 (452 aa).

Belongs to the UPF0210 family. Homodimer.

This Caldicellulosiruptor saccharolyticus (strain ATCC 43494 / DSM 8903 / Tp8T 6331) protein is UPF0210 protein Csac_1314.